The following is a 115-amino-acid chain: U3-lycotoxin-Ls1a (115 aa).

The N-terminal stretch at 1–20 is a signal peptide; the sequence is MKFVLLFGVLLVTLFSYSSA. The propeptide occupies 21 to 44; the sequence is EMLDDFDQAVEDELLSLIEKEEAR. 4 cysteine pairs are disulfide-bonded: Cys48–Cys63, Cys55–Cys72, Cys62–Cys87, and Cys74–Cys85.

The protein belongs to the neurotoxin 19 (CSTX) family. 01 subfamily. In terms of tissue distribution, expressed by the venom gland.

Its subcellular location is the secreted. The sequence is that of U3-lycotoxin-Ls1a from Lycosa singoriensis (Wolf spider).